We begin with the raw amino-acid sequence, 117 residues long: Ribosome-binding factor A (117 aa).

The protein belongs to the RbfA family. In terms of assembly, monomer. Binds 30S ribosomal subunits, but not 50S ribosomal subunits or 70S ribosomes.

Its subcellular location is the cytoplasm. One of several proteins that assist in the late maturation steps of the functional core of the 30S ribosomal subunit. Associates with free 30S ribosomal subunits (but not with 30S subunits that are part of 70S ribosomes or polysomes). Required for efficient processing of 16S rRNA. May interact with the 5'-terminal helix region of 16S rRNA. This chain is Ribosome-binding factor A, found in Leptospira interrogans serogroup Icterohaemorrhagiae serovar copenhageni (strain Fiocruz L1-130).